The following is a 284-amino-acid chain: MDAIKKKMLAMKMEKENALDRAEQVEQKLRDCECNKNKVEEDLNNLQKKFAILENDFDSINEQLLDANTKLEASEKKNAEIESETAGLQRRIQLLEEDLERSEERLQSATEKLEEASKAADESERGRKVLESRSLADDERLDGLEAQLKEAKYIAEDAERKFDEAARKLAITEVDLERAEARLEAAEAKILELEEELKVVGNNMKSLEISEQEASQREDSYEETIRDLTQRLKDAENRASEAERTVSKLQKEVDRLEDELLAEKERYKATSDELDSTFAELAGY.

Residues 1–284 (MDAIKKKMLA…DSTFAELAGY (284 aa)) adopt a coiled-coil conformation. Positions 105–131 (RLQSATEKLEEASKAADESERGRKVLE) are disordered.

Belongs to the tropomyosin family. In terms of assembly, homodimer.

Tropomyosin, in association with the troponin complex, plays a central role in the calcium dependent regulation of muscle contraction. This chain is Tropomyosin, found in Cornu aspersum (Brown garden snail).